A 400-amino-acid polypeptide reads, in one-letter code: Tyrosine--tRNA ligase (400 aa).

A 'HIGH' region motif is present at residues 45–54; it reads PTAPDLHLGH. The 'KMSKS' region signature appears at 230–234; that stretch reads KMSKS. Lys233 contacts ATP. The region spanning 339–399 is the S4 RNA-binding domain; sequence EWIARVLVIA…GKRRFAKVII (61 aa).

This sequence belongs to the class-I aminoacyl-tRNA synthetase family. TyrS type 2 subfamily. Homodimer.

The protein localises to the cytoplasm. It catalyses the reaction tRNA(Tyr) + L-tyrosine + ATP = L-tyrosyl-tRNA(Tyr) + AMP + diphosphate + H(+). Its function is as follows. Catalyzes the attachment of tyrosine to tRNA(Tyr) in a two-step reaction: tyrosine is first activated by ATP to form Tyr-AMP and then transferred to the acceptor end of tRNA(Tyr). The protein is Tyrosine--tRNA ligase of Helicobacter hepaticus (strain ATCC 51449 / 3B1).